Consider the following 187-residue polypeptide: NADH-quinone oxidoreductase subunit B (187 aa).

[4Fe-4S] cluster-binding residues include C66, C67, C131, and C161.

The protein belongs to the complex I 20 kDa subunit family. As to quaternary structure, NDH-1 is composed of 14 different subunits. Subunits NuoB, C, D, E, F, and G constitute the peripheral sector of the complex. Requires [4Fe-4S] cluster as cofactor.

Its subcellular location is the cell inner membrane. It carries out the reaction a quinone + NADH + 5 H(+)(in) = a quinol + NAD(+) + 4 H(+)(out). NDH-1 shuttles electrons from NADH, via FMN and iron-sulfur (Fe-S) centers, to quinones in the respiratory chain. Couples the redox reaction to proton translocation (for every two electrons transferred, four hydrogen ions are translocated across the cytoplasmic membrane), and thus conserves the redox energy in a proton gradient. The polypeptide is NADH-quinone oxidoreductase subunit B (Rhizorhabdus wittichii (strain DSM 6014 / CCUG 31198 / JCM 15750 / NBRC 105917 / EY 4224 / RW1) (Sphingomonas wittichii)).